The sequence spans 487 residues: Zinc finger protein 345 (487 aa).

15 C2H2-type zinc fingers span residues 62–84 (LECK…QRIH), 90–112 (YECK…QRIH), 118–140 (YECN…QRIH), 146–168 (YECK…QIIH), 174–196 (YECK…HRIH), 202–224 (YECK…RRVH), 230–252 (YECK…QRIH), 258–280 (YICN…QRIH), 286–308 (YVCK…QRIH), 314–336 (YECK…QRMH), 342–364 (YECK…QRIH), 370–392 (YECK…QLIH), 398–420 (YECR…QRIH), 426–448 (YECK…QRMH), and 454–476 (YECK…KKNH).

The protein belongs to the krueppel C2H2-type zinc-finger protein family.

The protein resides in the nucleus. In terms of biological role, may be involved in transcriptional regulation. The polypeptide is Zinc finger protein 345 (ZNF345) (Bos taurus (Bovine)).